Here is a 228-residue protein sequence, read N- to C-terminus: Cytochrome c oxidase subunit 2 (228 aa).

The Mitochondrial intermembrane segment spans residues 1–26 (MSTWANLGLQDSASPLMEQLIFFHDH). The helical transmembrane segment at 27-48 (ALLILVMITVLVGYLMFMLFFN) threads the bilayer. Over 49 to 62 (NYVNRFLLHGQLIE) the chain is Mitochondrial matrix. Residues 63–82 (MIWTILPAIILLFIALPSLR) form a helical membrane-spanning segment. Residues 83–228 (LLYLLDEINE…FIKWISSNNS (146 aa)) lie on the Mitochondrial intermembrane side of the membrane. Residues His161, Cys196, Glu198, Cys200, His204, and Met207 each coordinate Cu cation. Glu198 provides a ligand contact to Mg(2+).

The protein belongs to the cytochrome c oxidase subunit 2 family. In terms of assembly, component of the cytochrome c oxidase (complex IV, CIV), a multisubunit enzyme composed of a catalytic core of 3 subunits and several supernumerary subunits. The complex exists as a monomer or a dimer and forms supercomplexes (SCs) in the inner mitochondrial membrane with ubiquinol-cytochrome c oxidoreductase (cytochrome b-c1 complex, complex III, CIII). The cofactor is Cu cation.

It localises to the mitochondrion inner membrane. The enzyme catalyses 4 Fe(II)-[cytochrome c] + O2 + 8 H(+)(in) = 4 Fe(III)-[cytochrome c] + 2 H2O + 4 H(+)(out). Component of the cytochrome c oxidase, the last enzyme in the mitochondrial electron transport chain which drives oxidative phosphorylation. The respiratory chain contains 3 multisubunit complexes succinate dehydrogenase (complex II, CII), ubiquinol-cytochrome c oxidoreductase (cytochrome b-c1 complex, complex III, CIII) and cytochrome c oxidase (complex IV, CIV), that cooperate to transfer electrons derived from NADH and succinate to molecular oxygen, creating an electrochemical gradient over the inner membrane that drives transmembrane transport and the ATP synthase. Cytochrome c oxidase is the component of the respiratory chain that catalyzes the reduction of oxygen to water. Electrons originating from reduced cytochrome c in the intermembrane space (IMS) are transferred via the dinuclear copper A center (CU(A)) of subunit 2 and heme A of subunit 1 to the active site in subunit 1, a binuclear center (BNC) formed by heme A3 and copper B (CU(B)). The BNC reduces molecular oxygen to 2 water molecules using 4 electrons from cytochrome c in the IMS and 4 protons from the mitochondrial matrix. The polypeptide is Cytochrome c oxidase subunit 2 (mt:CoII) (Drosophila melanogaster (Fruit fly)).